Consider the following 61-residue polypeptide: Type IV secretion system protein PtlI homolog (61 aa).

A signal peptide spans 1 to 25 (MIHAHSNARLLRWAILAIAPVTLGA). Residues 37–61 (PDGKPLIPINTAAPEQGSSCQTRAP) form a disordered region. The segment covering 52–61 (QGSSCQTRAP) has biased composition (polar residues).

The chain is Type IV secretion system protein PtlI homolog (ptlI) from Bordetella parapertussis (strain 12822 / ATCC BAA-587 / NCTC 13253).